Here is a 108-residue protein sequence, read N- to C-terminus: Nucleoid-associated protein Csal_1459 (108 aa).

A compositionally biased stretch (basic and acidic residues) spans E84–E93. A disordered region spans residues E84 to F108.

It belongs to the YbaB/EbfC family. Homodimer.

Its subcellular location is the cytoplasm. The protein localises to the nucleoid. Binds to DNA and alters its conformation. May be involved in regulation of gene expression, nucleoid organization and DNA protection. This Chromohalobacter salexigens (strain ATCC BAA-138 / DSM 3043 / CIP 106854 / NCIMB 13768 / 1H11) protein is Nucleoid-associated protein Csal_1459.